A 382-amino-acid chain; its full sequence is ATP phosphoribosyltransferase regulatory subunit (382 aa).

It belongs to the class-II aminoacyl-tRNA synthetase family. HisZ subfamily. Heteromultimer composed of HisG and HisZ subunits.

Its subcellular location is the cytoplasm. It functions in the pathway amino-acid biosynthesis; L-histidine biosynthesis; L-histidine from 5-phospho-alpha-D-ribose 1-diphosphate: step 1/9. Its function is as follows. Required for the first step of histidine biosynthesis. May allow the feedback regulation of ATP phosphoribosyltransferase activity by histidine. In Verminephrobacter eiseniae (strain EF01-2), this protein is ATP phosphoribosyltransferase regulatory subunit.